Consider the following 378-residue polypeptide: Inner membrane protein YibH (378 aa).

Over 1–3 the chain is Periplasmic; the sequence is MDL. A helical transmembrane segment spans residues 4–24; sequence LIVLTYVALAWAVFKIFRIPV. Residues 25-26 are Cytoplasmic-facing; that stretch reads NQ. Residues 27–47 traverse the membrane as a helical segment; it reads WTLATAALGGVFLVSGLILLM. Topologically, residues 48–54 are periplasmic; the sequence is NYNHPYT. Residues 55–75 form a helical membrane-spanning segment; it reads FTAQKAVIAIPITPQVTGIVT. Residues 76–232 lie on the Cytoplasmic side of the membrane; the sequence is EVTDKNNQLI…RAPSNGYVTQ (157 aa). Residues 233–253 form a helical membrane-spanning segment; that stretch reads VLIRPGTYAAALPLRPVMVFI. Residues 254 to 280 lie on the Periplasmic side of the membrane; it reads PEQKRQIVAQFRQNSLLRLKPGDDAEV. The helical transmembrane segment at 281-301 threads the bilayer; sequence VFNALPGQVFHGKLTSILPVV. Residues 302 to 309 lie on the Cytoplasmic side of the membrane; the sequence is PGGSYQAQ. The chain crosses the membrane as a helical span at residues 310–330; that stretch reads GVLQSLTVVPGTDGVLGTIEL. The Periplasmic segment spans residues 331–378; that stretch reads DPNDDIDALPDGIYAQVAVYSDHFSHVSVMRKVLLRMTSWMHYLYLDH.

Belongs to the membrane fusion protein (MFP) (TC 8.A.1) family.

Its subcellular location is the cell inner membrane. This is Inner membrane protein YibH (yibH) from Escherichia coli O157:H7.